The following is a 662-amino-acid chain: DNA ligase (662 aa).

NAD(+)-binding positions include 34–38 (DYEYD), 83–84 (SI), and E113. K115 functions as the N6-AMP-lysine intermediate in the catalytic mechanism. NAD(+) contacts are provided by R136, E172, K286, and K310. Zn(2+) contacts are provided by C404, C407, C422, and C427. Positions 583 to 662 (KSGSTCFGKA…EAFTNLIHLE (80 aa)) constitute a BRCT domain.

The protein belongs to the NAD-dependent DNA ligase family. LigA subfamily. Mg(2+) serves as cofactor. It depends on Mn(2+) as a cofactor.

It carries out the reaction NAD(+) + (deoxyribonucleotide)n-3'-hydroxyl + 5'-phospho-(deoxyribonucleotide)m = (deoxyribonucleotide)n+m + AMP + beta-nicotinamide D-nucleotide.. Its function is as follows. DNA ligase that catalyzes the formation of phosphodiester linkages between 5'-phosphoryl and 3'-hydroxyl groups in double-stranded DNA using NAD as a coenzyme and as the energy source for the reaction. It is essential for DNA replication and repair of damaged DNA. The polypeptide is DNA ligase (Chlamydia pneumoniae (Chlamydophila pneumoniae)).